The chain runs to 1043 residues: Calcium-transporting ATPase 1, plasma membrane-type (1043 aa).

Residues 1 to 178 (MSFIRKKSME…FLWDASQDMT (178 aa)) are Cytoplasmic-facing. The next 2 helical transmembrane spans lie at 179-199 (LLLL…TEGW) and 202-222 (GMYD…ITAA). At 223–258 (SDYKQSLQFRDLDKEKKKIDVQVTRDGYRQKVSIYD) the chain is on the cytoplasmic side. 2 helical membrane passes run 259–279 (IVVG…DGLF) and 356–376 (VATI…TVLM). Topologically, residues 377–395 (ARFLLGKAGAPGGLLRWRM) are cytoplasmic. A helical transmembrane segment spans residues 396–416 (VDALAVLNFFAVAVTIIVVAV). Aspartate 460 (4-aspartylphosphate intermediate) is an active-site residue. Positions 761 and 765 each coordinate Mg(2+). The helical transmembrane segment at 824 to 844 (LTVNVVALMVNFISASFTGSA) threads the bilayer. Residue proline 845 is a topological domain, cytoplasmic. The next 2 membrane-spanning stretches (helical) occupy residues 846-866 (LTIV…ALAL) and 891-911 (VMWR…GVLL). Residues 912–955 (LRGKSLLQINGPQADSLLNTFVFNTFVFCQVFNEVNSREMEKIN) lie on the Cytoplasmic side of the membrane. Helical transmembrane passes span 956-976 (VFSG…TAGF) and 998-1018 (WLTS…LKCI). Over 1019 to 1043 (PVESGSDASDRHDGYRPIPTGPSAV) the chain is Cytoplasmic. The disordered stretch occupies residues 1023-1043 (GSDASDRHDGYRPIPTGPSAV).

Belongs to the cation transport ATPase (P-type) (TC 3.A.3) family. Type IIB subfamily.

It localises to the membrane. It catalyses the reaction Ca(2+)(in) + ATP + H2O = Ca(2+)(out) + ADP + phosphate + H(+). With respect to regulation, activated by calmodulin. In terms of biological role, this magnesium-dependent enzyme catalyzes the hydrolysis of ATP coupled with the translocation of calcium from the cytosol out of the cell, into the endoplasmic reticulum, or into organelles. This chain is Calcium-transporting ATPase 1, plasma membrane-type, found in Oryza sativa subsp. japonica (Rice).